We begin with the raw amino-acid sequence, 88 residues long: Putative membrane protein insertion efficiency factor (88 aa).

The protein belongs to the UPF0161 family.

It localises to the cell inner membrane. In terms of biological role, could be involved in insertion of integral membrane proteins into the membrane. The protein is Putative membrane protein insertion efficiency factor of Synechococcus sp. (strain CC9311).